Here is a 59-residue protein sequence, read N- to C-terminus: UPF0434 protein Sputw3181_2540 (59 aa).

It belongs to the UPF0434 family.

The sequence is that of UPF0434 protein Sputw3181_2540 from Shewanella sp. (strain W3-18-1).